The following is a 331-amino-acid chain: 3-dehydroquinate synthase homolog (331 aa).

The protein belongs to the archaeal-type DHQ synthase family.

This chain is 3-dehydroquinate synthase homolog, found in Aquifex aeolicus (strain VF5).